The primary structure comprises 312 residues: Polyamine aminopropyltransferase (312 aa).

The region spanning 7–247 is the PABS domain; the sequence is FFWAQEYFTP…GPLGFALAAQ (241 aa). Position 36 (glutamine 36) interacts with S-methyl-5'-thioadenosine. Residues histidine 67 and glutamate 95 each contribute to the spermidine site. S-methyl-5'-thioadenosine is bound by residues aspartate 115 and 147 to 148; that span reads DA. Residue aspartate 165 is the Proton acceptor of the active site. Position 174 (proline 174) interacts with S-methyl-5'-thioadenosine.

Belongs to the spermidine/spermine synthase family. In terms of assembly, homodimer or homotetramer.

Its subcellular location is the cytoplasm. It carries out the reaction S-adenosyl 3-(methylsulfanyl)propylamine + putrescine = S-methyl-5'-thioadenosine + spermidine + H(+). The protein operates within amine and polyamine biosynthesis; spermidine biosynthesis; spermidine from putrescine: step 1/1. Functionally, catalyzes the irreversible transfer of a propylamine group from the amino donor S-adenosylmethioninamine (decarboxy-AdoMet) to putrescine (1,4-diaminobutane) to yield spermidine. The sequence is that of Polyamine aminopropyltransferase from Synechococcus sp. (strain JA-3-3Ab) (Cyanobacteria bacterium Yellowstone A-Prime).